The chain runs to 629 residues: tRNA uridine 5-carboxymethylaminomethyl modification enzyme MnmG (629 aa).

FAD is bound by residues 13–18 (GGGHAG), Val125, and Ser180. 273–287 (GPRYCPSIEDKVMRF) lines the NAD(+) pocket. Gln370 contacts FAD.

The protein belongs to the MnmG family. Homodimer. Heterotetramer of two MnmE and two MnmG subunits. FAD serves as cofactor.

It localises to the cytoplasm. Its function is as follows. NAD-binding protein involved in the addition of a carboxymethylaminomethyl (cmnm) group at the wobble position (U34) of certain tRNAs, forming tRNA-cmnm(5)s(2)U34. The chain is tRNA uridine 5-carboxymethylaminomethyl modification enzyme MnmG from Salmonella agona (strain SL483).